Here is a 91-residue protein sequence, read N- to C-terminus: Sec-independent protein translocase protein TatA (91 aa).

Residues 1–21 (MGIFDWKHWIVILIVVVLVFG) traverse the membrane as a helical segment. A disordered region spans residues 42–91 (AMNDDDKPAEQPAPQPQQAQAAPQGSPLNQPHTIDAQAHKVDEPIRKDQV). Over residues 51-65 (EQPAPQPQQAQAAPQ) the composition is skewed to low complexity. Residues 78–91 (QAHKVDEPIRKDQV) are compositionally biased toward basic and acidic residues.

The protein belongs to the TatA/E family. The Tat system comprises two distinct complexes: a TatABC complex, containing multiple copies of TatA, TatB and TatC subunits, and a separate TatA complex, containing only TatA subunits. Substrates initially bind to the TatABC complex, which probably triggers association of the separate TatA complex to form the active translocon.

Its subcellular location is the cell inner membrane. Part of the twin-arginine translocation (Tat) system that transports large folded proteins containing a characteristic twin-arginine motif in their signal peptide across membranes. TatA could form the protein-conducting channel of the Tat system. In Pseudomonas savastanoi pv. phaseolicola (strain 1448A / Race 6) (Pseudomonas syringae pv. phaseolicola (strain 1448A / Race 6)), this protein is Sec-independent protein translocase protein TatA.